The primary structure comprises 71 residues: Mitochondrial import protein 1 (71 aa).

A helical transmembrane segment spans residues 22–44 (YAAINLGLPFLNGVMLGFGEIFA).

The protein belongs to the MIM1 family. Component of the mitochondrial outer import machinery (MIM) complex containing at least mim1 and mim2. Interacts with mim2. Interacts with mitophagy receptor atg43.

The protein resides in the mitochondrion outer membrane. Component of the mitochondrial outer import machinery (MIM) complex that mediates transport of proteins into mitochondrial compartments. Promotes the insertion of tom70 into the outer mitochondrial membrane. Promotes the insertion of atg43 into the outer mitochondrial membrane. The MIM complex cooperates with the receptor tom70 in binding of precursor proteins and promotes their insertion and assembly into the outer membrane. Involved in import of the subset of proteins with multiple alpha-helical transmembrane segments. Required for the assembly of the TOM (translocase of outer membrane) receptor complex, which is responsible for the recognition and translocation of cytosolically synthesized mitochondrial preproteins. In Schizosaccharomyces pombe (strain 972 / ATCC 24843) (Fission yeast), this protein is Mitochondrial import protein 1.